We begin with the raw amino-acid sequence, 245 residues long: MKAGHKTIDKSYMHVSLIFYSIIIFMNMPDFIIFETPMEYKPVLYFQRKLVDLRNNDKIDDTFIFLEHNDVYTAGVHYRGNDDIIRVERGGYETYHGPGQLVVYFIINLRERKMNALDLIKKIQNSVVNTLKYYNIESYPMLNEKTGVWHEDRKICSIGIAIRGFSTFHGMALNVNTDLSKFNRIMPCNFSPDIMTSMERISGRPFNINSVRERLIQSIEKEFDIKEKNIYKNVDLVGYGNGLLP.

Residues 38 to 227 (MEYKPVLYFQ…SIEKEFDIKE (190 aa)) enclose the BPL/LPL catalytic domain. Substrate contacts are provided by residues 89 to 96 (RGGYETYH), 157 to 159 (SIG), and 170 to 172 (GMA). Cys188 functions as the Acyl-thioester intermediate in the catalytic mechanism.

The protein belongs to the LipB family.

The protein localises to the cytoplasm. The catalysed reaction is octanoyl-[ACP] + L-lysyl-[protein] = N(6)-octanoyl-L-lysyl-[protein] + holo-[ACP] + H(+). It functions in the pathway protein modification; protein lipoylation via endogenous pathway; protein N(6)-(lipoyl)lysine from octanoyl-[acyl-carrier-protein]: step 1/2. Its function is as follows. Catalyzes the transfer of endogenously produced octanoic acid from octanoyl-acyl-carrier-protein onto the lipoyl domains of lipoate-dependent enzymes. Lipoyl-ACP can also act as a substrate although octanoyl-ACP is likely to be the physiological substrate. The sequence is that of Probable octanoyltransferase 2 from Picrophilus torridus (strain ATCC 700027 / DSM 9790 / JCM 10055 / NBRC 100828 / KAW 2/3).